The primary structure comprises 468 residues: MPANSWPDNDSYKELDPLNSLLSDVSTTEESVVETRDLSLPSRFQGRRGKAALVLTIVWSGTIALHLVSWGSIFILGLTTVLGIHALGVVFARPRHYQKEIQGSLPFVSILVAAKNEEAVIAKLAKNLCNLEYPNGQYEVWIIDDNSTDKTPHILAELAKEYDKLKVLRRSAQATGGKSGALNQVLPLTQGEIIAVFDADAQVASDMLLHVVPLFQREKVGAVQVRKAIANAKENFWTKGQMAEMSLDIWFQQQRTALGGIGELRGNGQFVRRQALDSCGGWNEETITDDLDLTFRLHLDKWDIECLFYPAVQEEGVTTAIALWHQRNRWAEGGYQRYLDYWDLILKNRMGTRKTWDMLMFMLTMYILPTAAIPDLLMALTRHRPPMLGPVTGLSVTMSVVGMFAGLRRIRQEQKFQVHTPFVLLLQTMRGTLYMLHWLVVMSSTTARMSFRPKRLKWVKTVHTGTGE.

4 consecutive transmembrane segments (helical) span residues 51–71 (AALV…VSWG), 72–92 (SIFI…VVFA), 358–378 (MLMF…DLLM), and 387–407 (MLGP…FAGL).

This sequence belongs to the glycosyltransferase 2 family. The cofactor is Mg(2+).

The protein resides in the membrane. It carries out the reaction a 1,2-diacyl-sn-glycerol + UDP-alpha-D-glucose = a 1,2-diacyl-3-O-(beta-D-glucopyranosyl)-sn-glycerol + UDP + H(+). Its function is as follows. Glucosyltransferase involved in the biosynthesis of the non-bilayer-forming membrane lipid beta-monoglucosyldiacylglycerol which contributes to regulate the properties and stability of the membrane. Catalyzes the transfer of a glucosyl residue from UDP-Glc to diacylglycerol (DAG) acceptor to form the corresponding beta-glucosyl-DAG (1,2-diacyl-3-O-(beta-D-glucopyranosyl)-sn-glycerol). It can only use UDP-Glc as sugar donor. Two types of DAG (dipalmitoyl-DAG (DPDAG) and 1-oleoyl-2-palmitoyl-DAG (OPDAG)) can be used as sugar acceptors, but OPDAG is preferred. The polypeptide is Beta-monoglucosyldiacylglycerol synthase (Nostoc sp. (strain PCC 7120 / SAG 25.82 / UTEX 2576)).